Reading from the N-terminus, the 352-residue chain is DNA ADP-ribosyl glycohydrolase (352 aa).

The Macro domain maps to 1 to 155 (MITYGSGDLL…IYPPSGGSRA (155 aa)). ADP-D-ribose is bound by residues 8–9 (DL), 20–22 (TVN), 31–34 (IALQ), and Thr79. The active-site Nucleophile is Lys80. 117–121 (GVGNG) is a binding site for ADP-D-ribose. Residues 164–352 (MTWGRAVILE…VALDRILMTA (189 aa)) form an interaction with DarT region.

It belongs to the DarG ADP-ribosyl glycohydrolase family. Interacts (via C-terminus) with cognate toxin DarT; this heterodimeric complex neutralizes the toxic effect of DarT by preventing ssDNA binding to DarT and consequently inactivating the toxin by direct protein-protein interactions.

The catalysed reaction is an N-(ADP-alpha-D-ribosyl)-thymidine in DNA + H2O = a thymidine in DNA + ADP-D-ribose. Functionally, antitoxin component of the hybrid type II/IV toxin-antitoxin (TA) system DarTG, which plays a crucial role in controlling bacterial growth and bacteriophage infection. De-ADP-ribosylates DNA (probably) modified on thymidine by its cognate toxin DarT, which neutralizes the activity of cognate toxin DarT. This Mycobacterium bovis (strain BCG / Pasteur 1173P2) protein is DNA ADP-ribosyl glycohydrolase.